Reading from the N-terminus, the 274-residue chain is NH(3)-dependent NAD(+) synthetase (274 aa).

46–53 (GISGGQDS) contributes to the ATP binding site. Asp52 provides a ligand contact to Mg(2+). Arg140 provides a ligand contact to deamido-NAD(+). Position 160 (Thr160) interacts with ATP. Glu165 is a Mg(2+) binding site. The deamido-NAD(+) site is built by Lys173 and Asp180. The ATP site is built by Lys189 and Thr211. Residue 260–261 (HK) participates in deamido-NAD(+) binding.

It belongs to the NAD synthetase family. In terms of assembly, homodimer.

The enzyme catalyses deamido-NAD(+) + NH4(+) + ATP = AMP + diphosphate + NAD(+) + H(+). It participates in cofactor biosynthesis; NAD(+) biosynthesis; NAD(+) from deamido-NAD(+) (ammonia route): step 1/1. Functionally, catalyzes the ATP-dependent amidation of deamido-NAD to form NAD. Uses ammonia as a nitrogen source. The chain is NH(3)-dependent NAD(+) synthetase from Listeria monocytogenes serovar 1/2a (strain ATCC BAA-679 / EGD-e).